Here is a 376-residue protein sequence, read N- to C-terminus: Dihydroorotate dehydrogenase (quinone) (376 aa).

FMN-binding positions include 78–82 (AGFDK) and T102. Position 82 (K82) interacts with substrate. Residue 127–131 (NRMGF) participates in substrate binding. The FMN site is built by N157 and N190. N190 serves as a coordination point for substrate. The Nucleophile role is filled by S193. N195 serves as a coordination point for substrate. FMN is bound by residues K228 and T256. Position 257 to 258 (257 to 258 (NT)) interacts with substrate. FMN is bound by residues G286, G315, and 336 to 337 (YT).

It belongs to the dihydroorotate dehydrogenase family. Type 2 subfamily. Monomer. FMN serves as cofactor.

The protein resides in the cell membrane. The catalysed reaction is (S)-dihydroorotate + a quinone = orotate + a quinol. Its pathway is pyrimidine metabolism; UMP biosynthesis via de novo pathway; orotate from (S)-dihydroorotate (quinone route): step 1/1. In terms of biological role, catalyzes the conversion of dihydroorotate to orotate with quinone as electron acceptor. This is Dihydroorotate dehydrogenase (quinone) from Trichormus variabilis (strain ATCC 29413 / PCC 7937) (Anabaena variabilis).